We begin with the raw amino-acid sequence, 305 residues long: Ribosomal RNA small subunit methyltransferase H (305 aa).

S-adenosyl-L-methionine-binding positions include 33–35 (GGY), aspartate 51, phenylalanine 82, aspartate 96, and glutamine 103.

This sequence belongs to the methyltransferase superfamily. RsmH family.

It localises to the cytoplasm. It catalyses the reaction cytidine(1402) in 16S rRNA + S-adenosyl-L-methionine = N(4)-methylcytidine(1402) in 16S rRNA + S-adenosyl-L-homocysteine + H(+). Its function is as follows. Specifically methylates the N4 position of cytidine in position 1402 (C1402) of 16S rRNA. The polypeptide is Ribosomal RNA small subunit methyltransferase H (Rickettsia bellii (strain OSU 85-389)).